Reading from the N-terminus, the 391-residue chain is G-patch domain-containing protein 1 (391 aa).

The G-patch domain occupies 15 to 61 (KDSAAFKLMKSMGWEEGEGLGKDKQGIKGYVRVTNKQDTSGVGLDKP). 2 disordered regions span residues 80 to 132 (VQAA…EKGK) and 212 to 307 (KASE…PAKR). Composition is skewed to acidic residues over residues 92–102 (DDSDKEDESED) and 265–295 (NSDD…DDDK). The short motif at 305-312 (AKRKHDEI) is the Nuclear localization signal element.

Strongly expressed in tissues with high cell proliferation activity that have a high demand for ribosome production such as shoot tips, leaves primordia, root tips and floral buds.

It localises to the nucleus. The protein resides in the nucleolus. Involved in ribosome biogenesis, required for normal progression of rRNA processing. Seems to promote cell proliferation in leaves. This chain is G-patch domain-containing protein 1, found in Arabidopsis thaliana (Mouse-ear cress).